Consider the following 1537-residue polypeptide: DNA excision repair protein ERCC-6-like 2 (1537 aa).

The 186-residue stretch at 134 to 319 (YRHYIEGRGC…WCVMDWAVPG (186 aa)) folds into the Helicase ATP-binding domain. 147 to 154 (DDMGLGKT) serves as a coordination point for ATP. Positions 270–273 (DEAH) match the DEAH box motif. Residues 510 to 660 (VLQQLLNHFR…CVVVGSENAK (151 aa)) form the Helicase C-terminal domain. 2 disordered regions span residues 715 to 735 (KGEP…QEPT) and 749 to 768 (SVGH…TSRT). Residues 755-764 (GKTDKHKFSD) are compositionally biased toward basic and acidic residues. Residues 772–783 (PAQLTLLQCGFS) carry the Atypical PIP-box motif. Disordered regions lie at residues 791–811 (KSDQ…DEQP), 833–891 (SEHQ…EDSD), and 918–948 (EDSE…PNLL). The span at 834–857 (EHQKSDNIQTPDEKCVSDKSEKTL) shows a compositional bias: basic and acidic residues. Phosphoserine is present on residues S968 and S971. The segment at 1274 to 1306 (VHKKEERVRNKSKEKESLLKENPSNDSTLSCYD) is disordered. The span at 1276 to 1292 (KKEERVRNKSKEKESLL) shows a compositional bias: basic and acidic residues. Residues 1295-1306 (NPSNDSTLSCYD) show a composition bias toward polar residues.

This sequence belongs to the SNF2/RAD54 helicase family. In terms of assembly, interacts with NEK6. Interacts (via an atypical PIP-box) with PCNA; this interaction facilitates cenrtomeric localization of ERCC6L2. Interacts with CYREN; this interaction is DNA independent. Interacts with XRCC6 and XRCC5. Phosphorylated by NEK6.

It localises to the nucleus. It is found in the cytoplasm. The protein localises to the cytoskeleton. Its subcellular location is the microtubule organizing center. The protein resides in the centrosome. It localises to the mitochondrion. It is found in the chromosome. The protein localises to the centromere. Its function is as follows. Promotes double-strand break (DSB) end-joining and facilitates programmed recombination by controlling how DNA ends are joined in a spatially oriented manner during repair. Also plays a role in DNA repair by restricting DNA end resection in double strand break (DSB) repair. Facilitates replication of complex DNA regions and regulates the maintenance of chromatin structure. The polypeptide is DNA excision repair protein ERCC-6-like 2 (Mus musculus (Mouse)).